Consider the following 401-residue polypeptide: O-antigen ligase (401 aa).

Topologically, residues 1–20 (MFAATRLSRLRHDTSRILSH) are cytoplasmic. A helical membrane pass occupies residues 21–37 (WILPLGWLALLTGMFWV). Over 38–42 (GDRSD) the chain is Periplasmic. The helical transmembrane segment at 43–61 (YHRLFYILLAAPTLLYVIL) threads the bilayer. Residues 62–72 (QPRLLRPLTGS) are Cytoplasmic-facing. A helical transmembrane segment spans residues 73-92 (PLFIAFLAFSSYMMLSLSWS). Over 93-103 (TPENSTGSLLK) the chain is Periplasmic. The helical transmembrane segment at 104 to 122 (RPLYIALLFFCAAILALEA) threads the bilayer. Residues 123–129 (PLRLKTA) are Cytoplasmic-facing. A helical transmembrane segment spans residues 130–150 (TWLAALGAVISAAATLLRYYW). Residues 151–161 (DANPLRLTGYG) are Periplasmic-facing. The helical transmembrane segment at 162-183 (ALYNPLLSAHVYGAFTALWLAY) threads the bilayer. At 184–189 (WMQSRP) the chain is on the cytoplasmic side. A helical membrane pass occupies residues 190–208 (ILAPLPLISLALLGGLLIA). Over 209–212 (TGSR) the chain is Periplasmic. The chain crosses the membrane as a helical span at residues 213 to 229 (TPLVGLTAALMWLVLAG). Over 230-234 (DRKKA) the chain is Cytoplasmic. A helical membrane pass occupies residues 235–252 (LIALALALAGALLGYILY). The Periplasmic segment spans residues 253-306 (PEVITQRGASFRPEIWADALRQISEHPWLGHGYDHPMRIVLSNGMLLADPHNIE). The WZY-C stretch occupies residues 258 to 319 (QRGASFRPEI…LFAGGIIGLL (62 aa)). The helical transmembrane segment at 307–331 (LGVLFAGGIIGLLLWVAIYALAFGF) threads the bilayer. Over 332-339 (SWKNRKSP) the chain is Cytoplasmic. The helical transmembrane segment at 340–357 (AVLLASTWLVFGLAAGLT) threads the bilayer. The Periplasmic segment spans residues 358–368 (EGNAFLPRPKE). The chain crosses the membrane as a helical span at residues 369 to 385 (HWFLIWIPMALLYALWI). Topologically, residues 386–401 (QQRFAASRRGEDIAAP) are cytoplasmic.

Belongs to the O-antigen ligase family. Homodimer.

Its subcellular location is the cell inner membrane. It carries out the reaction a lipid-linked O antigen + a lipid A-core oligosaccharide = a lipopolysaccharide + a polyisoprenyl diphosphate.. It participates in bacterial outer membrane biogenesis; lipopolysaccharide biosynthesis. Its activity is regulated as follows. Activity does not require ATP and magnesium ions. Transferase involved in the biosynthesis of the lipopolysaccharide (LPS). Catalyzes the transfer of a polymerized O-antigen molecule from its polyprenyl diphosphate membrane anchor to a terminal sugar of the lipid A-core oligosaccharide, finalizing the biosynthesis of the lipopolysaccharide. Required for the attachment of both A-band and B-band O-antigens, two forms of O-antigen produced by P.aeruginosa, onto the lipid A-core receptors. Important for cell wall integrity and motility of the bacteria. The polypeptide is O-antigen ligase (Pseudomonas aeruginosa (strain ATCC 15692 / DSM 22644 / CIP 104116 / JCM 14847 / LMG 12228 / 1C / PRS 101 / PAO1)).